The following is a 136-amino-acid chain: Small ribosomal subunit protein uS9 (136 aa).

Residues 96-136 form a disordered region; the sequence is LSPDNRKPLKTEGHLSRDPRAKERRKYGLKKARKAPQFSKR. Positions 98–116 are enriched in basic and acidic residues; the sequence is PDNRKPLKTEGHLSRDPRA. The segment covering 117–136 has biased composition (basic residues); the sequence is KERRKYGLKKARKAPQFSKR.

Belongs to the universal ribosomal protein uS9 family.

This is Small ribosomal subunit protein uS9 from Prochlorococcus marinus (strain MIT 9515).